The primary structure comprises 378 residues: MFYVSKVTPFFFALALLNLLISLFIRLSQDTSLFFVSLVFGFVGLTLMGAMYQIIPNSQNRKLSIPKVSYLVFFLILVSFYEFYTGNTESGSLFLFLGSLIFFFHLLLNVKNFYPLTVRFLLASMIYLVLSALFLYLHFKGFLPVQLSVHTLTVGSMLNAIYGVELAWIPMLIMETLNIRKGEKLFTAKQVSTLALLLAFWSMNYKLIALAGLLEFGVALYFLYLNYELFKRKRMPTPPPNVVKIFLFALLFLPLGMLLGIFSASHAQALPFSLRLHLDLILYGFGAFTIFGGMLHLLPRIVWNWKVQEKENPGFTMGDLVNERELQTFLEYSALLYALFLAVDSLFSPLHVISTVVYLVIMALFLKEIHKAFLYIFK.

The next 10 membrane-spanning stretches (helical) occupy residues 7-29 (VTPFFFALALLNLLISLFIRLSQ), 33-55 (LFFVSLVFGFVGLTLMGAMYQII), 68-85 (VSYLVFFLILVSFYEFYT), 90-108 (SGSLFLFLGSLIFFFHLLL), 115-137 (PLTVRFLLASMIYLVLSALFLYL), 152-174 (LTVGSMLNAIYGVELAWIPMLIM), 204-225 (NYKLIALAGLLEFGVALYFLYL), 245-267 (IFLFALLFLPLGMLLGIFSASHA), 280-302 (LILYGFGAFTIFGGMLHLLPRIV), and 347-366 (FSPLHVISTVVYLVIMALFL).

Its subcellular location is the cell membrane. This is an uncharacterized protein from Aquifex aeolicus (strain VF5).